A 163-amino-acid polypeptide reads, in one-letter code: HTH-type transcriptional regulator IscR (163 aa).

Residues 2-131 (RLTSKGRYAV…NNITLGELVN (130 aa)) form the HTH rrf2-type domain. Positions 28-51 (LADISERQGISLSYLEQLFSRLRK) form a DNA-binding region, H-T-H motif. The [2Fe-2S] cluster site is built by Cys-92, Cys-98, and Cys-104.

[2Fe-2S] cluster is required as a cofactor.

Regulates the transcription of several operons and genes involved in the biogenesis of Fe-S clusters and Fe-S-containing proteins. The chain is HTH-type transcriptional regulator IscR from Enterobacter sp. (strain 638).